The chain runs to 237 residues: Pyridoxal phosphate homeostasis protein (237 aa).

Lysine 35 carries the post-translational modification N6-(pyridoxal phosphate)lysine.

Belongs to the pyridoxal phosphate-binding protein YggS/PROSC family.

Its function is as follows. Pyridoxal 5'-phosphate (PLP)-binding protein, which is involved in PLP homeostasis. This is Pyridoxal phosphate homeostasis protein from Haemophilus influenzae (strain ATCC 51907 / DSM 11121 / KW20 / Rd).